A 165-amino-acid chain; its full sequence is SPbeta prophage-derived uncharacterized protein YorR (165 aa).

This Bacillus subtilis (strain 168) protein is SPbeta prophage-derived uncharacterized protein YorR (yorR).